Here is a 1021-residue protein sequence, read N- to C-terminus: DNA-directed RNA polymerase 2B, chloroplastic/mitochondrial (1021 aa).

Positions 315–337 (KKQKAEKDKQKEDGEHVTQEQEK) are disordered. Catalysis depends on residues aspartate 722, lysine 797, and aspartate 954.

Belongs to the phage and mitochondrial RNA polymerase family.

It is found in the plastid. The protein resides in the chloroplast. Its subcellular location is the mitochondrion. It carries out the reaction RNA(n) + a ribonucleoside 5'-triphosphate = RNA(n+1) + diphosphate. In terms of biological role, DNA-dependent RNA polymerase catalyzes the transcription of DNA into RNA using the four ribonucleoside triphosphates as substrates. This is DNA-directed RNA polymerase 2B, chloroplastic/mitochondrial (RPOT2-TOM) from Nicotiana tabacum (Common tobacco).